A 254-amino-acid polypeptide reads, in one-letter code: 5'-nucleotidase SurE (254 aa).

The a divalent metal cation site is built by Asp-8, Asp-9, Ser-39, and Asn-91.

It belongs to the SurE nucleotidase family. A divalent metal cation is required as a cofactor.

It is found in the cytoplasm. The catalysed reaction is a ribonucleoside 5'-phosphate + H2O = a ribonucleoside + phosphate. In terms of biological role, nucleotidase that shows phosphatase activity on nucleoside 5'-monophosphates. In Methylibium petroleiphilum (strain ATCC BAA-1232 / LMG 22953 / PM1), this protein is 5'-nucleotidase SurE.